A 141-amino-acid polypeptide reads, in one-letter code: UPF0310 protein SGO_1818 (141 aa).

The protein belongs to the UPF0310 family.

This is UPF0310 protein SGO_1818 from Streptococcus gordonii (strain Challis / ATCC 35105 / BCRC 15272 / CH1 / DL1 / V288).